Here is a 178-residue protein sequence, read N- to C-terminus: ATP synthase subunit delta (178 aa).

Belongs to the ATPase delta chain family. In terms of assembly, F-type ATPases have 2 components, F(1) - the catalytic core - and F(0) - the membrane proton channel. F(1) has five subunits: alpha(3), beta(3), gamma(1), delta(1), epsilon(1). F(0) has three main subunits: a(1), b(2) and c(10-14). The alpha and beta chains form an alternating ring which encloses part of the gamma chain. F(1) is attached to F(0) by a central stalk formed by the gamma and epsilon chains, while a peripheral stalk is formed by the delta and b chains.

The protein localises to the cell membrane. In terms of biological role, f(1)F(0) ATP synthase produces ATP from ADP in the presence of a proton or sodium gradient. F-type ATPases consist of two structural domains, F(1) containing the extramembraneous catalytic core and F(0) containing the membrane proton channel, linked together by a central stalk and a peripheral stalk. During catalysis, ATP synthesis in the catalytic domain of F(1) is coupled via a rotary mechanism of the central stalk subunits to proton translocation. Its function is as follows. This protein is part of the stalk that links CF(0) to CF(1). It either transmits conformational changes from CF(0) to CF(1) or is implicated in proton conduction. This is ATP synthase subunit delta from Streptococcus equi subsp. zooepidemicus (strain MGCS10565).